We begin with the raw amino-acid sequence, 92 residues long: Small ribosomal subunit protein uS19 (92 aa).

It belongs to the universal ribosomal protein uS19 family.

Protein S19 forms a complex with S13 that binds strongly to the 16S ribosomal RNA. This chain is Small ribosomal subunit protein uS19, found in Methylobacterium radiotolerans (strain ATCC 27329 / DSM 1819 / JCM 2831 / NBRC 15690 / NCIMB 10815 / 0-1).